The primary structure comprises 73 residues: Conotoxin Leo-O2 (73 aa).

The N-terminal stretch at 1-22 (MKLTCVLIIAVLFLTACQLVTA) is a signal peptide. Positions 23–47 (DYSGDEQQYRAMRLIDAMRNFGDTR) are excised as a propeptide. 3 cysteine pairs are disulfide-bonded: cysteine 49–cysteine 59, cysteine 56–cysteine 64, and cysteine 58–cysteine 69.

It belongs to the conotoxin O1 superfamily. As to expression, expressed by the venom duct.

The protein resides in the secreted. In Conus leopardus (Leopard cone), this protein is Conotoxin Leo-O2.